A 190-amino-acid chain; its full sequence is Ribose 1,5-bisphosphate phosphokinase PhnN (190 aa).

10–17 contacts ATP; that stretch reads GPSGSGKD.

This sequence belongs to the ribose 1,5-bisphosphokinase family.

The enzyme catalyses alpha-D-ribose 1,5-bisphosphate + ATP = 5-phospho-alpha-D-ribose 1-diphosphate + ADP. It functions in the pathway metabolic intermediate biosynthesis; 5-phospho-alpha-D-ribose 1-diphosphate biosynthesis; 5-phospho-alpha-D-ribose 1-diphosphate from D-ribose 5-phosphate (route II): step 3/3. In terms of biological role, catalyzes the phosphorylation of ribose 1,5-bisphosphate to 5-phospho-D-ribosyl alpha-1-diphosphate (PRPP). In Pseudomonas fluorescens (strain SBW25), this protein is Ribose 1,5-bisphosphate phosphokinase PhnN.